Reading from the N-terminus, the 414-residue chain is Serine hydroxymethyltransferase (414 aa).

(6S)-5,6,7,8-tetrahydrofolate is bound by residues leucine 121 and 125–127 (GHL). Lysine 229 carries the N6-(pyridoxal phosphate)lysine modification.

This sequence belongs to the SHMT family. In terms of assembly, homodimer. Pyridoxal 5'-phosphate serves as cofactor.

The protein localises to the cytoplasm. It carries out the reaction (6R)-5,10-methylene-5,6,7,8-tetrahydrofolate + glycine + H2O = (6S)-5,6,7,8-tetrahydrofolate + L-serine. It functions in the pathway one-carbon metabolism; tetrahydrofolate interconversion. It participates in amino-acid biosynthesis; glycine biosynthesis; glycine from L-serine: step 1/1. In terms of biological role, catalyzes the reversible interconversion of serine and glycine with tetrahydrofolate (THF) serving as the one-carbon carrier. This reaction serves as the major source of one-carbon groups required for the biosynthesis of purines, thymidylate, methionine, and other important biomolecules. Also exhibits THF-independent aldolase activity toward beta-hydroxyamino acids, producing glycine and aldehydes, via a retro-aldol mechanism. This chain is Serine hydroxymethyltransferase, found in Janthinobacterium sp. (strain Marseille) (Minibacterium massiliensis).